Consider the following 343-residue polypeptide: Heat-inducible transcription repressor HrcA (343 aa).

The protein belongs to the HrcA family.

Negative regulator of class I heat shock genes (grpE-dnaK-dnaJ and groELS operons). Prevents heat-shock induction of these operons. The protein is Heat-inducible transcription repressor HrcA of Lysinibacillus sphaericus (Bacillus sphaericus).